Reading from the N-terminus, the 267-residue chain is 5'-nucleotidase SurE (267 aa).

A divalent metal cation-binding residues include Asp9, Asp10, Ser41, and Asn95.

This sequence belongs to the SurE nucleotidase family. The cofactor is a divalent metal cation.

It localises to the cytoplasm. It carries out the reaction a ribonucleoside 5'-phosphate + H2O = a ribonucleoside + phosphate. Its function is as follows. Nucleotidase that shows phosphatase activity on nucleoside 5'-monophosphates. The protein is 5'-nucleotidase SurE of Aeropyrum pernix (strain ATCC 700893 / DSM 11879 / JCM 9820 / NBRC 100138 / K1).